Reading from the N-terminus, the 805-residue chain is MQFPESWLRSLVNPSIGTDELAHRLTMAGLEVEETEPAAPPFTGVVVTRIVDIAPHPDADKLRVCQVDDGSGALLQIVCGAPNAAAGLTVPLARVGAELPGGMKIGVAKMRGVQSSGMLCSARELGLSQDHAGLLELPAALRPGTDIRAALDLDDTLFTLKLTPNRADCLSILGVAREVAALTGTPLTAPAAEPVPVTIDHRLPVAIQAPDLCGRFAGRVIQGVNARAATPEWMKTRLERAGQRSVSALVDISNYVMLEVGRPSHVFDLDKIGGDLSVRWAREGETLELLNGQAVALDPKVGVVVAGEQVESLAGIMGGEATSVTLDTRNIYLEAAFWWPGAIAGRARRYKFSSEASHRFERGVDYASIPEHIELITRLILDICGGQAGPVDDQCVNLPVREPVRMRLARCHRVLGVAVERAEVAQIFTRLGLPFQEQGDDFVVTPPSYRFDIEIEEDLIEEVARVYGFERIPDVPPVARAKMHAQPEARRGAHAVRRLVAARDYQEVVNYSFVEAAWERDYAGNDNPVRLVNPIASHLSVMRSSLIAGLVAIVRHNANRKQSRMRLFELGRVFHRDPQLADGPLEVAGVRQPLMLAGVAWGGAVEEQWGVPHRQVDFYDVKQDIEALFGARADALRFVADRYPALHPGRSARIELDGQPIGWLGELHPQWTQQADLHHAPVVFELDFEALAERRLPAVRKLSRQPVVVRDLALWVDAKLPAQAMLDTVAAAIARDPQLSVVQDAQVFDVWREKPVAGQTVTEKSLAFRFWLQDTEVTLDEARVADCIARIKDALVAAHNARQRA.

In terms of domain architecture, tRNA-binding spans 39–148 (APPFTGVVVT…AALRPGTDIR (110 aa)). Residues 399 to 474 (PVREPVRMRL…RVYGFERIPD (76 aa)) form the B5 domain. Mg(2+) contacts are provided by Asp-452, Asp-458, Glu-461, and Glu-462. The FDX-ACB domain occupies 703–804 (SRQPVVVRDL…LVAAHNARQR (102 aa)).

The protein belongs to the phenylalanyl-tRNA synthetase beta subunit family. Type 1 subfamily. Tetramer of two alpha and two beta subunits. It depends on Mg(2+) as a cofactor.

It localises to the cytoplasm. The enzyme catalyses tRNA(Phe) + L-phenylalanine + ATP = L-phenylalanyl-tRNA(Phe) + AMP + diphosphate + H(+). The polypeptide is Phenylalanine--tRNA ligase beta subunit (Bordetella pertussis (strain Tohama I / ATCC BAA-589 / NCTC 13251)).